A 37-amino-acid chain; its full sequence is Potassium channel toxin alpha-KTx 4.3 (37 aa).

3 disulfides stabilise this stretch: Cys-7–Cys-28, Cys-13–Cys-33, and Cys-17–Cys-35. Residues 26–33 (GKCMNGKC) are interaction with Ca(2+)-activated K(+) channels.

Expressed by the venom gland.

The protein localises to the secreted. Blocks reversibly Shaker B potassium-channels. The sequence is that of Potassium channel toxin alpha-KTx 4.3 from Tityus discrepans (Venezuelan scorpion).